Here is a 410-residue protein sequence, read N- to C-terminus: Arginine deiminase (410 aa).

Cysteine 400 serves as the catalytic Amidino-cysteine intermediate.

It belongs to the arginine deiminase family.

The protein localises to the cytoplasm. It catalyses the reaction L-arginine + H2O = L-citrulline + NH4(+). It functions in the pathway amino-acid degradation; L-arginine degradation via ADI pathway; carbamoyl phosphate from L-arginine: step 1/2. The polypeptide is Arginine deiminase (arcA) (Borreliella burgdorferi (strain ATCC 35210 / DSM 4680 / CIP 102532 / B31) (Borrelia burgdorferi)).